We begin with the raw amino-acid sequence, 119 residues long: Large ribosomal subunit protein uL18 (119 aa).

This sequence belongs to the universal ribosomal protein uL18 family. Part of the 50S ribosomal subunit; part of the 5S rRNA/L5/L18/L25 subcomplex. Contacts the 5S and 23S rRNAs.

In terms of biological role, this is one of the proteins that bind and probably mediate the attachment of the 5S RNA into the large ribosomal subunit, where it forms part of the central protuberance. The chain is Large ribosomal subunit protein uL18 from Nitrosomonas europaea (strain ATCC 19718 / CIP 103999 / KCTC 2705 / NBRC 14298).